The following is a 459-amino-acid chain: Putrescine aminotransferase (459 aa).

Residues 150–151 and Gln-274 contribute to the pyridoxal 5'-phosphate site; that span reads GT. At Lys-300 the chain carries N6-(pyridoxal phosphate)lysine. Residue Thr-332 participates in pyridoxal 5'-phosphate binding.

The protein belongs to the class-III pyridoxal-phosphate-dependent aminotransferase family. Putrescine aminotransferase subfamily. Pyridoxal 5'-phosphate is required as a cofactor.

It catalyses the reaction an alkane-alpha,omega-diamine + 2-oxoglutarate = an omega-aminoaldehyde + L-glutamate. It carries out the reaction putrescine + 2-oxoglutarate = 1-pyrroline + L-glutamate + H2O. The enzyme catalyses cadaverine + 2-oxoglutarate = 5-aminopentanal + L-glutamate. It participates in amine and polyamine degradation; putrescine degradation; 4-aminobutanal from putrescine (transaminase route): step 1/1. Catalyzes the aminotransferase reaction from putrescine to 2-oxoglutarate, leading to glutamate and 4-aminobutanal, which spontaneously cyclizes to form 1-pyrroline. This is the first step in one of two pathways for putrescine degradation, where putrescine is converted into 4-aminobutanoate (gamma-aminobutyrate or GABA) via 4-aminobutanal. Also functions as a cadaverine transaminase in a a L-lysine degradation pathway to succinate that proceeds via cadaverine, glutarate and L-2-hydroxyglutarate. This Shigella boydii serotype 4 (strain Sb227) protein is Putrescine aminotransferase.